A 463-amino-acid chain; its full sequence is Glutamate--tRNA ligase 2 (463 aa).

A 'HIGH' region motif is present at residues 10–20 (PSPTGFLHIGS). The short motif at 239-243 (KLSKR) is the 'KMSKS' region element. An ATP-binding site is contributed by Lys-242.

Belongs to the class-I aminoacyl-tRNA synthetase family. Glutamate--tRNA ligase type 1 subfamily. Monomer.

The protein localises to the cytoplasm. The enzyme catalyses tRNA(Glu) + L-glutamate + ATP = L-glutamyl-tRNA(Glu) + AMP + diphosphate. In terms of biological role, catalyzes the attachment of glutamate to tRNA(Glu) in a two-step reaction: glutamate is first activated by ATP to form Glu-AMP and then transferred to the acceptor end of tRNA(Glu). This chain is Glutamate--tRNA ligase 2, found in Rickettsia akari (strain Hartford).